Reading from the N-terminus, the 274-residue chain is Diaminopimelate epimerase (274 aa).

3 residues coordinate substrate: Asn11, Gln44, and Asn64. Residue Cys73 is the Proton donor of the active site. Substrate contacts are provided by residues 74 to 75, Asn157, Asn190, and 208 to 209; these read GN and ER. Cys217 serves as the catalytic Proton acceptor. 218 to 219 serves as a coordination point for substrate; it reads GS.

It belongs to the diaminopimelate epimerase family. In terms of assembly, homodimer.

It is found in the cytoplasm. The enzyme catalyses (2S,6S)-2,6-diaminopimelate = meso-2,6-diaminopimelate. It functions in the pathway amino-acid biosynthesis; L-lysine biosynthesis via DAP pathway; DL-2,6-diaminopimelate from LL-2,6-diaminopimelate: step 1/1. In terms of biological role, catalyzes the stereoinversion of LL-2,6-diaminopimelate (L,L-DAP) to meso-diaminopimelate (meso-DAP), a precursor of L-lysine and an essential component of the bacterial peptidoglycan. In Shigella flexneri serotype 5b (strain 8401), this protein is Diaminopimelate epimerase.